Here is an 82-residue protein sequence, read N- to C-terminus: Cytochrome b559 subunit alpha (82 aa).

The chain crosses the membrane as a helical span at residues valine 21–tryptophan 35. Residue histidine 23 participates in heme binding.

This sequence belongs to the PsbE/PsbF family. As to quaternary structure, heterodimer of an alpha subunit and a beta subunit. PSII is composed of 1 copy each of membrane proteins PsbA, PsbB, PsbC, PsbD, PsbE, PsbF, PsbH, PsbI, PsbJ, PsbK, PsbL, PsbM, PsbT, PsbX, PsbY, PsbZ, Psb30/Ycf12, at least 3 peripheral proteins of the oxygen-evolving complex and a large number of cofactors. It forms dimeric complexes. Heme b is required as a cofactor.

Its subcellular location is the plastid. The protein localises to the chloroplast thylakoid membrane. This b-type cytochrome is tightly associated with the reaction center of photosystem II (PSII). PSII is a light-driven water:plastoquinone oxidoreductase that uses light energy to abstract electrons from H(2)O, generating O(2) and a proton gradient subsequently used for ATP formation. It consists of a core antenna complex that captures photons, and an electron transfer chain that converts photonic excitation into a charge separation. The protein is Cytochrome b559 subunit alpha of Stigeoclonium helveticum (Green alga).